Reading from the N-terminus, the 139-residue chain is D-ribose pyranase (139 aa).

His-20 acts as the Proton donor in catalysis. Substrate is bound by residues Asp-28, His-106, and 128-130 (YAN).

It belongs to the RbsD / FucU family. RbsD subfamily. Homodecamer.

Its subcellular location is the cytoplasm. It catalyses the reaction beta-D-ribopyranose = beta-D-ribofuranose. Its pathway is carbohydrate metabolism; D-ribose degradation; D-ribose 5-phosphate from beta-D-ribopyranose: step 1/2. Catalyzes the interconversion of beta-pyran and beta-furan forms of D-ribose. The polypeptide is D-ribose pyranase (Escherichia coli O81 (strain ED1a)).